The chain runs to 197 residues: Protein-S-isoprenylcysteine O-methyltransferase B (197 aa).

The next 3 membrane-spanning stretches (helical) occupy residues 16 to 36 (MFLA…AIHG), 52 to 72 (ALAM…FPGL), and 81 to 101 (FGLT…ITAG). S-adenosyl-L-methionine contacts are provided by residues 116–119 (HKLV), tyrosine 124, and 129–132 (HPSY). The helical transmembrane segment at 140-160 (VGTQVMLCNPISAIAFAVVVW) threads the bilayer. Position 166 (arginine 166) interacts with substrate. Glutamate 170 is a binding site for S-adenosyl-L-methionine.

It belongs to the class VI-like SAM-binding methyltransferase superfamily. Isoprenylcysteine carboxyl methyltransferase family. Requires Zn(2+) as cofactor. In terms of tissue distribution, expressed in flowers, stems, leaves, roots and siliques. Detected in apices and vascular tissues of leaves and roots, in the stigma and in the filaments and anthers of stamen. Not found in petioles or hypocotyls.

The protein resides in the endoplasmic reticulum membrane. The enzyme catalyses [protein]-C-terminal S-[(2E,6E)-farnesyl]-L-cysteine + S-adenosyl-L-methionine = [protein]-C-terminal S-[(2E,6E)-farnesyl]-L-cysteine methyl ester + S-adenosyl-L-homocysteine. With respect to regulation, inhibited by farnesylthioacetic acid (FTAA) and N-acetyl-S-trans, trans-farnesyl-l-cysteine (AFC). Its function is as follows. Catalyzes the post-translational methylation of isoprenylated C-terminal cysteine residues, resulting in the modulation of the function of prenylated proteins. Involved in negative regulation of abscisic acid signaling. Carboxyl methylation is a reversible and potentially regulated step in the post-translational modification of prenylated proteins. The polypeptide is Protein-S-isoprenylcysteine O-methyltransferase B (Arabidopsis thaliana (Mouse-ear cress)).